We begin with the raw amino-acid sequence, 155 residues long: Small ribosomal subunit protein uS7 (155 aa).

Belongs to the universal ribosomal protein uS7 family. Part of the 30S ribosomal subunit. Contacts proteins S9 and S11.

One of the primary rRNA binding proteins, it binds directly to 16S rRNA where it nucleates assembly of the head domain of the 30S subunit. Is located at the subunit interface close to the decoding center, probably blocks exit of the E-site tRNA. This chain is Small ribosomal subunit protein uS7, found in Mesoplasma florum (strain ATCC 33453 / NBRC 100688 / NCTC 11704 / L1) (Acholeplasma florum).